The sequence spans 137 residues: Fibroblast growth factor 2 (137 aa).

Residue Asn27 coordinates heparin. A Phosphotyrosine; by TEC modification is found at Tyr73. A Glycyl lysine isopeptide (Lys-Gly) (interchain with G-Cter in SUMO1) cross-link involves residue Lys86. The segment at 119–135 (KRTGQYKLGSKTGPGQK) is heparin-binding.

Belongs to the heparin-binding growth factors family. As to quaternary structure, monomer. Homodimer. Interacts with FGFR1, FGFR2, FGFR3 and FGFR4. Affinity between fibroblast growth factors (FGFs) and their receptors is increased by heparan sulfate glycosaminoglycans that function as coreceptors. Interacts with CSPG4, FGFBP1 and TEC. Found in a complex with FGFBP1, FGF1 and FGF2. Interacts with FGFBP3. Interacts with integrin ITGAV:ITGB3; the interaction is required for FGF2 signaling. Interacts with SNORC (via the extracellular domain). Interacts with glypican GPC3. Phosphorylation at Tyr-73 regulates FGF2 unconventional secretion.

Its subcellular location is the secreted. The protein localises to the nucleus. Acts as a ligand for FGFR1, FGFR2, FGFR3 and FGFR4. Also acts as an integrin ligand which is required for FGF2 signaling. Binds to integrin ITGAV:ITGB3. Plays an important role in the regulation of cell survival, cell division, cell differentiation and cell migration. Functions as a potent mitogen in vitro. Can induce angiogenesis. Mediates phosphorylation of ERK1/2 and thereby promotes retinal lens fiber differentiation. This chain is Fibroblast growth factor 2 (FGF2), found in Oryctolagus cuniculus (Rabbit).